The following is a 267-amino-acid chain: Expansin-B10 (267 aa).

The signal sequence occupies residues 1–22 (MASSCLLLACVVAAAMVSAVSC). N32 carries an N-linked (GlcNAc...) asparagine glycan. The Expansin-like EG45 domain occupies 61–167 (GGACGYKDID…RRVRCKYPGE (107 aa)). 3 disulfide bridges follow: C64/C92, C95/C162, and C100/C106. The 82-residue stretch at 181-262 (NYFAVLVKYV…NWKANALYKS (82 aa)) folds into the Expansin-like CBD domain. A glycan (N-linked (GlcNAc...) asparagine) is linked at N213.

Belongs to the expansin family. Expansin B subfamily.

The protein resides in the secreted. It is found in the cell wall. It localises to the membrane. May cause loosening and extension of plant cell walls by disrupting non-covalent bonding between cellulose microfibrils and matrix glucans. No enzymatic activity has been found. May be required for rapid internodal elongation in deepwater rice during submergence. This chain is Expansin-B10 (EXPB10), found in Oryza sativa subsp. japonica (Rice).